The following is a 133-amino-acid chain: Ribosome-binding factor A (133 aa).

This sequence belongs to the RbfA family. As to quaternary structure, monomer. Binds 30S ribosomal subunits, but not 50S ribosomal subunits or 70S ribosomes.

Its subcellular location is the cytoplasm. In terms of biological role, one of several proteins that assist in the late maturation steps of the functional core of the 30S ribosomal subunit. Associates with free 30S ribosomal subunits (but not with 30S subunits that are part of 70S ribosomes or polysomes). Required for efficient processing of 16S rRNA. May interact with the 5'-terminal helix region of 16S rRNA. This is Ribosome-binding factor A from Cytophaga hutchinsonii (strain ATCC 33406 / DSM 1761 / CIP 103989 / NBRC 15051 / NCIMB 9469 / D465).